A 663-amino-acid polypeptide reads, in one-letter code: COBRA-like protein 9 (663 aa).

The first 23 residues, 1 to 23, serve as a signal peptide directing secretion; sequence MGVLLPIFFGVLLLFTVTPPSMS. Asn63, Asn111, Asn121, Asn169, Asn203, Asn326, Asn355, Asn397, Asn409, Asn429, Asn470, Asn550, and Asn561 each carry an N-linked (GlcNAc...) asparagine glycan. Ser638 is lipidated: GPI-anchor amidated serine. Residues 639–663 constitute a propeptide, removed in mature form; it reads GGRRNGAITVLSFITFYVAAFMVLL.

It belongs to the COBRA family. In terms of tissue distribution, expressed only in flowers.

It localises to the cell membrane. This is COBRA-like protein 9 (COBL9) from Arabidopsis thaliana (Mouse-ear cress).